A 148-amino-acid polypeptide reads, in one-letter code: Large ribosomal subunit protein bL9 (148 aa).

It belongs to the bacterial ribosomal protein bL9 family.

Functionally, binds to the 23S rRNA. This chain is Large ribosomal subunit protein bL9, found in Pseudomonas aeruginosa (strain LESB58).